The following is a 417-amino-acid chain: D-amino acid dehydrogenase (417 aa).

3-17 (AVVLGSGVVGLMSAW) contributes to the FAD binding site.

It belongs to the DadA oxidoreductase family. FAD serves as cofactor.

It catalyses the reaction a D-alpha-amino acid + A + H2O = a 2-oxocarboxylate + AH2 + NH4(+). Functionally, oxidative deamination of D-amino acids. In Vibrio vulnificus (strain YJ016), this protein is D-amino acid dehydrogenase.